A 210-amino-acid polypeptide reads, in one-letter code: Large ribosomal subunit protein uL4 (210 aa).

The tract at residues 44 to 77 is disordered; sequence ARQGNASSKTRSEVRGGGRKPWRQKGTGRARAGS. Residues 60 to 71 show a composition bias toward basic residues; sequence GGRKPWRQKGTG.

The protein belongs to the universal ribosomal protein uL4 family. As to quaternary structure, part of the 50S ribosomal subunit.

One of the primary rRNA binding proteins, this protein initially binds near the 5'-end of the 23S rRNA. It is important during the early stages of 50S assembly. It makes multiple contacts with different domains of the 23S rRNA in the assembled 50S subunit and ribosome. In terms of biological role, forms part of the polypeptide exit tunnel. This chain is Large ribosomal subunit protein uL4, found in Microcystis aeruginosa (strain NIES-843 / IAM M-2473).